The sequence spans 298 residues: 2-dehydropantoate 2-reductase (298 aa).

NADP(+) contacts are provided by residues 7–12 (GGGSVG), asparagine 98, and alanine 124. Residue asparagine 98 participates in substrate binding. The active-site Proton donor is lysine 179. Residues asparagine 183, asparagine 187, asparagine 197, and serine 246 each contribute to the substrate site. Glutamate 258 contributes to the NADP(+) binding site.

This sequence belongs to the ketopantoate reductase family.

The protein localises to the cytoplasm. It carries out the reaction (R)-pantoate + NADP(+) = 2-dehydropantoate + NADPH + H(+). The protein operates within cofactor biosynthesis; (R)-pantothenate biosynthesis; (R)-pantoate from 3-methyl-2-oxobutanoate: step 2/2. In terms of biological role, catalyzes the NADPH-dependent reduction of ketopantoate into pantoic acid. This Bacillus subtilis (strain 168) protein is 2-dehydropantoate 2-reductase (panE).